A 495-amino-acid chain; its full sequence is REST corepressor 3 (495 aa).

Residues 1 to 83 enclose the ELM2 domain; sequence MRVGAEYQAR…KSLADLPNFT (83 aa). A Glycyl lysine isopeptide (Lys-Gly) (interchain with G-Cter in SUMO2) cross-link involves residue K20. The 52-residue stretch at 84–135 folds into the SANT 1 domain; it reads PFPDEWTVEDKVLFEQAFSFHGKSFHRIQQMLPDKTIASLVKYYYSWKKTRS. The disordered stretch occupies residues 147–219; the sequence is LANRHNQGDS…SQRSKCRPPK (73 aa). Phosphoserine occurs at positions 156 and 171. The segment covering 162–184 has biased composition (basic and acidic residues); that stretch reads ETHPMDGNDSDYDPKKEAKKEGN. K193 is covalently cross-linked (Glycyl lysine isopeptide (Lys-Gly) (interchain with G-Cter in SUMO2)). Residues 205-217 are compositionally biased toward basic residues; that stretch reads QHRHHSQRSKCRP. Residues 237–273 are a coiled coil; the sequence is AANTILRQLDMELISLKRQVQNAKQVNSALKQKMEGG. A Glycyl lysine isopeptide (Lys-Gly) (interchain with G-Cter in SUMO2) cross-link involves residue K285. Residues 285-336 enclose the SANT 2 domain; the sequence is KINARWTTEEQLLAVQGVRKYGKDFQAIADVIGNKTVGQVKNFFVNYRRRFN. Residues 346–495 form a disordered region; it reads AEQGTQASNG…IQTDSQSSLH (150 aa). Over residues 348–357 the composition is skewed to polar residues; the sequence is QGTQASNGDA. T376 is subject to Phosphothreonine. Pro residues predominate over residues 393–405; the sequence is PSPPAPSSTPTPT. Low complexity predominate over residues 419-428; the sequence is RPTLPAAPAL. R445 and R457 each carry asymmetric dimethylarginine. Polar residues predominate over residues 475–495; that stretch reads VGGQQPPSLIGIQTDSQSSLH.

Belongs to the CoREST family.

It is found in the nucleus. May act as a component of a corepressor complex that represses transcription. The sequence is that of REST corepressor 3 (RCOR3) from Homo sapiens (Human).